A 2217-amino-acid chain; its full sequence is DNA polymerase epsilon catalytic subunit A (2217 aa).

Residues Cys2104, Cys2107, Cys2126, and Cys2129 each contribute to the Zn(2+) site. A CysA-type zinc finger spans residues 2104-2129 (CEYCSYVSDLDLCRDGLDGKFQCPRC). [4Fe-4S] cluster-binding residues include Cys2160, Cys2163, Cys2175, and Cys2177. A CysB motif motif is present at residues 2160–2177 (CEKCHTVKRDLMSTNCNC).

Belongs to the DNA polymerase type-B family. In terms of assembly, heterotetramer. Consists of 4 subunits: POL2, DPB2, DPB3 and DPB4. It depends on [4Fe-4S] cluster as a cofactor.

The protein localises to the nucleus. It catalyses the reaction DNA(n) + a 2'-deoxyribonucleoside 5'-triphosphate = DNA(n+1) + diphosphate. In terms of biological role, DNA polymerase II participates in chromosomal DNA replication. The polypeptide is DNA polymerase epsilon catalytic subunit A (POL2) (Candida glabrata (strain ATCC 2001 / BCRC 20586 / JCM 3761 / NBRC 0622 / NRRL Y-65 / CBS 138) (Yeast)).